Consider the following 236-residue polypeptide: UPF0502 protein BamMC406_5439 (236 aa).

It belongs to the UPF0502 family.

The polypeptide is UPF0502 protein BamMC406_5439 (Burkholderia ambifaria (strain MC40-6)).